Consider the following 435-residue polypeptide: MFDIKAIRDDAGAFDAGLAKRGLAPQAARLIEIDERRRAIITSLQELQQRRNDASKQIGQAKAKKDDALAQSLMEEVASIKSAIQEGEEKERAANAEIEAALASIPNIPFDDVPVGPDESANVIRHSHGKAREMNFAPKEHFDLGEALGLMDFEAAAKMSGARFTVLKGQLARLERAIGNFMVDLHTTEFGYEEVAPPLMVRDDAMFGTAQLPKFEDDQFATFKGLARDDQEKYWLIPTAEVPLTNLVRESILSEEELPKRFTAYTACFRAEAGSAGRDTRGMIRQHQFSKVELVSITTPEKSREEHERMLSCAEEVLKRLDLHYRVMTLSTGDMGFASRKTYDIEVWLPGQNAFREISSCSVCGDFQARRMNARYRPKGEKNTRFVHTLNGSGLAVGRALVAVMENYQQADGSITVPTALQPYMGGQEVIAVHG.

239 to 241 lines the L-serine pocket; it reads TAE. Residue 270–272 participates in ATP binding; sequence RAE. Glu-293 is an L-serine binding site. 357-360 contributes to the ATP binding site; the sequence is EISS. Position 393 (Ser-393) interacts with L-serine.

This sequence belongs to the class-II aminoacyl-tRNA synthetase family. Type-1 seryl-tRNA synthetase subfamily. In terms of assembly, homodimer. The tRNA molecule binds across the dimer.

It is found in the cytoplasm. The catalysed reaction is tRNA(Ser) + L-serine + ATP = L-seryl-tRNA(Ser) + AMP + diphosphate + H(+). It carries out the reaction tRNA(Sec) + L-serine + ATP = L-seryl-tRNA(Sec) + AMP + diphosphate + H(+). Its pathway is aminoacyl-tRNA biosynthesis; selenocysteinyl-tRNA(Sec) biosynthesis; L-seryl-tRNA(Sec) from L-serine and tRNA(Sec): step 1/1. Catalyzes the attachment of serine to tRNA(Ser). Is also able to aminoacylate tRNA(Sec) with serine, to form the misacylated tRNA L-seryl-tRNA(Sec), which will be further converted into selenocysteinyl-tRNA(Sec). The sequence is that of Serine--tRNA ligase from Parvibaculum lavamentivorans (strain DS-1 / DSM 13023 / NCIMB 13966).